Reading from the N-terminus, the 681-residue chain is MMEKGIWKDALIQSTKKLSPKLQVKNPVMLLVYVGAILATSLYFLGFFGISDEKSGYTLAIALILWFTVLFANFAEAIAEGRGRAQADSLKMARKDVLARKLKNIDDKTDVIEIASNDLKKGDIVYVLANEQIPMDGEVIEGAASVDESAITGESAPVIRESGGDRSAVTGGTTLVSDWLVVRVTAVSGESFLDKMIAMVEGASRKKTPNEIALQILLVTLSIIFLAVSATLLPFTEFASKQAGAGSAISITNVIALLVCLAPTTIGALLSSIGIAGMSRLNQANVLAMSGRAIEAAGDVDVLLLDKTGTITLGNRKASEFLPVDGVTEQELADAAQLSSIADETAEGRSIVVLAKERFDIRGRDFAEMHAEFVPFTATTRMSGIDYQENTIRKGAADAVRAYVTANGGTYPKECDAIVSKVAGAGGTPLVVVRNNKVLGVIYLKDIVKNGVKERFLDLRKMGIKTIMITGDNPMTAAAIAAEAGVDDFLAEATPEAKLELIREYQREGHLVAMTGDGTNDAPALAQADVAVAMNTGTQAAKEAGNMVDLDSSPTKLIDIVRIGKQLLMTRGALTTFSVANDLAKYFAIIPVLFYGIFPQLEALNLMGLTSPTSAILSAIIYNAVIIIILIPLSLKGVKYREMPAGKLLSRNMLIYGLGGLIAPFIAIKLIDMLLTVLGIV.

4 consecutive transmembrane segments (helical) span residues Leu30–Ile50, Leu59–Ala79, Ile216–Thr236, and Ile255–Ile275. Residue Asp306 is the 4-aspartylphosphate intermediate of the active site. Residues Asp343, Glu347, Phe376–Ser383, and Lys394 each bind ATP. The Mg(2+) site is built by Asp517 and Asp521. The next 3 helical transmembrane spans lie at Phe587–Met607, Ala615–Leu635, and Leu661–Val681.

Belongs to the cation transport ATPase (P-type) (TC 3.A.3) family. Type IA subfamily. As to quaternary structure, the system is composed of three essential subunits: KdpA, KdpB and KdpC.

The protein localises to the cell membrane. It catalyses the reaction K(+)(out) + ATP + H2O = K(+)(in) + ADP + phosphate + H(+). Its function is as follows. Part of the high-affinity ATP-driven potassium transport (or Kdp) system, which catalyzes the hydrolysis of ATP coupled with the electrogenic transport of potassium into the cytoplasm. This subunit is responsible for energy coupling to the transport system and for the release of the potassium ions to the cytoplasm. The sequence is that of Potassium-transporting ATPase ATP-binding subunit from Listeria monocytogenes serotype 4b (strain CLIP80459).